Consider the following 381-residue polypeptide: Glycerate 2-kinase (381 aa).

Belongs to the glycerate kinase type-1 family.

The enzyme catalyses (R)-glycerate + ATP = (2R)-2-phosphoglycerate + ADP + H(+). In terms of biological role, catalyzes the transfer of the phosphate group from adenosine triphosphate (ATP) to (R)-glycerate to form (2R)-2-phosphoglycerate, an enzymatic step in (L)-glucarate/galactarate catabolic pathway. This is Glycerate 2-kinase (garK) from Escherichia coli (strain K12).